The following is a 529-amino-acid chain: Peptide chain release factor 3 (529 aa).

The tr-type G domain occupies 11 to 280 (AKRRTFAIIS…GLVEWAPAPM (270 aa)). GTP-binding positions include 20-27 (SHPDAGKT), 88-92 (DTPGH), and 142-145 (NKLD).

Belongs to the TRAFAC class translation factor GTPase superfamily. Classic translation factor GTPase family. PrfC subfamily.

It is found in the cytoplasm. In terms of biological role, increases the formation of ribosomal termination complexes and stimulates activities of RF-1 and RF-2. It binds guanine nucleotides and has strong preference for UGA stop codons. It may interact directly with the ribosome. The stimulation of RF-1 and RF-2 is significantly reduced by GTP and GDP, but not by GMP. The polypeptide is Peptide chain release factor 3 (Shigella flexneri serotype 5b (strain 8401)).